The sequence spans 154 residues: UPF0756 membrane protein BPUM_2558 (154 aa).

The next 4 helical transmembrane spans lie at phenylalanine 8 to valine 28, tryptophan 54 to phenylalanine 74, tryptophan 87 to leucine 107, and leucine 117 to isoleucine 137.

The protein belongs to the UPF0756 family.

The protein resides in the cell membrane. The polypeptide is UPF0756 membrane protein BPUM_2558 (Bacillus pumilus (strain SAFR-032)).